We begin with the raw amino-acid sequence, 554 residues long: Hydroxylamine reductase (554 aa).

C3, C6, C18, and C25 together coordinate [2Fe-2S] cluster. Positions 252, 276, 320, 408, 436, 461, 495, and 497 each coordinate hybrid [4Fe-2O-2S] cluster. Position 408 is a cysteine persulfide (C408).

Belongs to the HCP family. [2Fe-2S] cluster is required as a cofactor. Hybrid [4Fe-2O-2S] cluster serves as cofactor.

The protein resides in the cytoplasm. It carries out the reaction A + NH4(+) + H2O = hydroxylamine + AH2 + H(+). Catalyzes the reduction of hydroxylamine to form NH(3) and H(2)O. In Photobacterium profundum (strain SS9), this protein is Hydroxylamine reductase.